The primary structure comprises 306 residues: Recombination-associated protein RdgC (306 aa).

This sequence belongs to the RdgC family.

The protein localises to the cytoplasm. Its subcellular location is the nucleoid. Its function is as follows. May be involved in recombination. In Pseudomonas paraeruginosa (strain DSM 24068 / PA7) (Pseudomonas aeruginosa (strain PA7)), this protein is Recombination-associated protein RdgC.